Reading from the N-terminus, the 193-residue chain is Large ribosomal subunit protein uL18 (193 aa).

This sequence belongs to the universal ribosomal protein uL18 family. In terms of assembly, part of the 50S ribosomal subunit. Contacts the 5S and 23S rRNAs.

This is one of the proteins that bind and probably mediate the attachment of the 5S RNA into the large ribosomal subunit, where it forms part of the central protuberance. The sequence is that of Large ribosomal subunit protein uL18 from Methanococcus maripaludis (strain DSM 14266 / JCM 13030 / NBRC 101832 / S2 / LL).